Consider the following 397-residue polypeptide: Formate-dependent phosphoribosylglycinamide formyltransferase (397 aa).

N(1)-(5-phospho-beta-D-ribosyl)glycinamide contacts are provided by residues 22–23 (EL) and E82. ATP contacts are provided by residues R114, K155, 160 to 165 (SSGKGQ), 195 to 198 (EGFV), and E203. Residues 119–312 (CLAAEELSLP…EFALHARAIL (194 aa)) enclose the ATP-grasp domain. E271 and E283 together coordinate Mg(2+). Residues D290, K360, and 367–368 (RR) contribute to the N(1)-(5-phospho-beta-D-ribosyl)glycinamide site.

Belongs to the PurK/PurT family. In terms of assembly, homodimer.

The enzyme catalyses N(1)-(5-phospho-beta-D-ribosyl)glycinamide + formate + ATP = N(2)-formyl-N(1)-(5-phospho-beta-D-ribosyl)glycinamide + ADP + phosphate + H(+). It functions in the pathway purine metabolism; IMP biosynthesis via de novo pathway; N(2)-formyl-N(1)-(5-phospho-D-ribosyl)glycinamide from N(1)-(5-phospho-D-ribosyl)glycinamide (formate route): step 1/1. In terms of biological role, involved in the de novo purine biosynthesis. Catalyzes the transfer of formate to 5-phospho-ribosyl-glycinamide (GAR), producing 5-phospho-ribosyl-N-formylglycinamide (FGAR). Formate is provided by PurU via hydrolysis of 10-formyl-tetrahydrofolate. In Alcanivorax borkumensis (strain ATCC 700651 / DSM 11573 / NCIMB 13689 / SK2), this protein is Formate-dependent phosphoribosylglycinamide formyltransferase.